We begin with the raw amino-acid sequence, 503 residues long: ATP synthase subunit alpha (503 aa).

170-177 (GDRQTGKT) serves as a coordination point for ATP.

In terms of assembly, F-type ATPases have 2 components, CF(1) - the catalytic core - and CF(0) - the membrane proton channel. CF(1) has five subunits: alpha(3), beta(3), gamma(1), delta(1), epsilon(1). CF(0) has four main subunits: a(1), b(1), b'(1) and c(9-12).

It localises to the cellular thylakoid membrane. The enzyme catalyses ATP + H2O + 4 H(+)(in) = ADP + phosphate + 5 H(+)(out). Its activity is regulated as follows. Inhibited by dicyclohexylcarbodiimide. Functionally, produces ATP from ADP in the presence of a proton gradient across the membrane. The alpha chain is a regulatory subunit. Its function is as follows. The complex from the organism is particularly stable to disruption and remains functional after 6 hrs at 55 degrees Celsius. This Thermosynechococcus vestitus (strain NIES-2133 / IAM M-273 / BP-1) protein is ATP synthase subunit alpha.